A 516-amino-acid polypeptide reads, in one-letter code: MVQAKAQQQLYTHAAEPKAVQQRRAKYREDETTQTLPTANIMFDRRVVRGNTYAARILPADATQTQTKGPSPASTKKRTTRTLPPRTPEAVDGRRHIDIQTDVYLEELTDTVPEADTSTQTDAFLDRPPTPLFVPQKTGTDAITQIENGDLFDFDFEVEPILEVLVGKVLEQGLMEVLEEEELAAMRAHQEHFEQIRNAELVATQRMEAAERRKLEEKERRMQQERERVERERVVRQKVAASAFARGYLSGIVNTVFDRLVSSGYIYDPVMREVETAFMPWLKEQAIGYLARGVVARRVVDKLVEDAAAALAANRSTLADKAASTAATVDAWAERQAKMEAELQGKELEAVRRRPTFVLRELKPAVASADAVEAAAAELTAQAEEAANAKWEADKAEAAEKARAEAEAAAEEQKALLEELAATAAAEAEERGEEPPAEPPSLPDGVEPVDVEAEVAKAVEAVPKPPVKEVTDIDILSYMMDKGAITKDAIIQALAVHALGDKAYTNHPAFAEAEGA.

Polar residues-rich tracts occupy residues 1–11 (MVQAKAQQQLY) and 62–74 (ATQTQTKGPSPAS). 4 disordered regions span residues 1 to 32 (MVQAKAQQQLYTHAAEPKAVQQRRAKYREDET), 60 to 90 (ADATQTQTKGPSPASTKKRTTRTLPPRTPEA), 388 to 412 (NAKWEADKAEAAEKARAEAEAAAEE), and 424 to 447 (AAAEAEERGEEPPAEPPSLPDGVE). The span at 391–412 (WEADKAEAAEKARAEAEAAAEE) shows a compositional bias: basic and acidic residues.

Belongs to the flagellar radial spoke RSP3 family. As to quaternary structure, interacts with FAP91. In terms of processing, protein 3 is one of the 5 radial spoke proteins that are phosphorylated. Post-translationally, protein 3a might only differ from protein 3 in being unphosphorylated.

The protein resides in the cytoplasm. Its subcellular location is the cytoskeleton. It localises to the flagellum axoneme. Protein 3 may attach the radial spoke to the outer doublet microtubule or is required to form a stable spoke structure. Its function is as follows. Flagellar radial spokes contribute to the regulation of dynein arm activity and thus the pattern of flagellar bending. They consist of a thin stalk, which is attached to the a subfiber of the outer doublet microtubule, and a bulbous head, which is attached to the stalk and appears to interact with the projections from the central pair of microtubules. The polypeptide is Flagellar radial spoke protein 3 (Chlamydomonas reinhardtii (Chlamydomonas smithii)).